Here is a 463-residue protein sequence, read N- to C-terminus: MLSVREFSNISMIKGPLIYVQGVTDASYNELVEIEMPNGEKRRGLVIDSQMGIAIVQVFEGTTGVSPTGTKIRMLGRGLEVKISEEMLGRIFNPLGDSLDNGPPVIKGEKRDINGSPLNPAAREYPEEFIQTGISAIDGLNALLRGQKLPIFSGSGLPANMLAAQIAKQATVRGEESNFAVVFAAIGARYDDALFFRKFFEETGAINRVAMIVSLANEPPVMKTLTPKTALTLAEYLAFEQDMHVLAILIDMTNYCEALREISAAREEVPGRGGYPGYMYTDLATIYERAGKVLGKKGSITQMPILTMPNDDITHPIPDLTGYITEGQIVLDRALYNKGIYPPINVLMSLSRLAKDGIGEGKTRDDHKDVSNQLFASYARAVDTRGLAAIIGEDSLSEVDRKYLLFGELFERKFVSQGFNENRDIETTLDIGWEILSVLPESELTNIKTQYIKKYHPNYRGKK.

Belongs to the ATPase alpha/beta chains family. Has multiple subunits with at least A(3), B(3), C, D, E, F, H, I and proteolipid K(x).

Its subcellular location is the cell membrane. Its function is as follows. Component of the A-type ATP synthase that produces ATP from ADP in the presence of a proton gradient across the membrane. The B chain is a regulatory subunit. In Saccharolobus islandicus (strain Y.N.15.51 / Yellowstone #2) (Sulfolobus islandicus), this protein is A-type ATP synthase subunit B.